The following is a 360-amino-acid chain: Putative transcription factor A494R (360 aa).

A zinc finger spans residues 153 to 175 (CTCGGQMELWVNSTQSDLVCNEC).

Belongs to the nucleo-cytoplasmic large DNA viruses (NCLDVs) VLTF-3 family.

Putative transcription factor. This is Putative transcription factor A494R from Paramecium bursaria Chlorella virus 1 (PBCV-1).